Reading from the N-terminus, the 491-residue chain is Probable glycine dehydrogenase (decarboxylating) subunit 2 (491 aa).

Position 273 is an N6-(pyridoxal phosphate)lysine (K273).

The protein belongs to the GcvP family. C-terminal subunit subfamily. The glycine cleavage system is composed of four proteins: P, T, L and H. In this organism, the P 'protein' is a heterodimer of two subunits. Requires pyridoxal 5'-phosphate as cofactor.

The enzyme catalyses N(6)-[(R)-lipoyl]-L-lysyl-[glycine-cleavage complex H protein] + glycine + H(+) = N(6)-[(R)-S(8)-aminomethyldihydrolipoyl]-L-lysyl-[glycine-cleavage complex H protein] + CO2. Its function is as follows. The glycine cleavage system catalyzes the degradation of glycine. The P protein binds the alpha-amino group of glycine through its pyridoxal phosphate cofactor; CO(2) is released and the remaining methylamine moiety is then transferred to the lipoamide cofactor of the H protein. This Bacillus cereus (strain B4264) protein is Probable glycine dehydrogenase (decarboxylating) subunit 2.